A 278-amino-acid chain; its full sequence is Large ribosomal subunit protein uL2c (278 aa).

The disordered stretch occupies residues 224-256; sequence NPVDHPHGGGEGRAPIGRKKPTTPWGYPALGRK.

The protein belongs to the universal ribosomal protein uL2 family. Part of the 50S ribosomal subunit.

The protein resides in the plastid. The chain is Large ribosomal subunit protein uL2c (rpl2) from Cuscuta exaltata (Tall dodder).